Here is a 353-residue protein sequence, read N- to C-terminus: Methionine import ATP-binding protein MetN (353 aa).

The ABC transporter domain occupies 11-251 (ITFDRVEKSF…PEHPTTRSFL (241 aa)). 48–55 (GRSGAGKS) is a binding site for ATP.

Belongs to the ABC transporter superfamily. Methionine importer (TC 3.A.1.24) family. The complex is composed of two ATP-binding proteins (MetN), two transmembrane proteins (MetI) and a solute-binding protein (MetQ).

The protein resides in the cell inner membrane. The enzyme catalyses L-methionine(out) + ATP + H2O = L-methionine(in) + ADP + phosphate + H(+). It catalyses the reaction D-methionine(out) + ATP + H2O = D-methionine(in) + ADP + phosphate + H(+). Functionally, part of the ABC transporter complex MetNIQ involved in methionine import. Responsible for energy coupling to the transport system. This Cereibacter sphaeroides (strain ATCC 17023 / DSM 158 / JCM 6121 / CCUG 31486 / LMG 2827 / NBRC 12203 / NCIMB 8253 / ATH 2.4.1.) (Rhodobacter sphaeroides) protein is Methionine import ATP-binding protein MetN.